Reading from the N-terminus, the 179-residue chain is uncharacterized protein (179 aa).

This is an uncharacterized protein from Galliformes (FAdV-1).